A 304-amino-acid chain; its full sequence is Tegument protein VP22 (304 aa).

Disordered regions lie at residues 23-68 and 112-184; these read YSTV…PNDD and STSN…GTPK. The span at 43 to 58 shows a compositional bias: basic and acidic residues; that stretch reads RENDLYDKQSVSKEND. The span at 123–142 shows a compositional bias: pro residues; the sequence is AQPPPRGAAAAPPPRVPTRP. Over residues 143–154 the composition is skewed to low complexity; the sequence is PTRAAATSTTPR. The short motif at 160–163 is the Nuclear localization signal element; sequence PKQR. Residues 233 to 245 carry the Nuclear export signal motif; sequence LDRFLKAAAIRIL. The segment at 262–304 is disordered; sequence STPDGYAAAGPNGYDRRPRTASRRRSLKCKPPADDFFDDTNSG. Basic residues predominate over residues 280–289; sequence RTASRRRSLK.

Belongs to the alphaherpesvirinae VP22 tegument protein family. Interacts with gE (via C-terminus); this interaction is necessary for the recruitment of VP22 to the Golgi and its packaging into virions. Interacts with gM (via C-terminus). Interacts with VP16; this interaction allows the formation of a tripartite complex composed of VP16, VP22 and UL41/VHS. Interacts with the capsid-binding protein UL16. Interacts with host CGAS. In terms of processing, highly phosphorylated in the host cell. Packaging is selective for underphosphorylated forms.

It localises to the virion tegument. The protein resides in the host cytoplasm. Its subcellular location is the host nucleus. The protein localises to the host Golgi apparatus. Tegument protein that plays different roles during the time course of infection. Participates in both the accumulation of viral mRNAs and viral protein translation at late time of infection. Modulates the RNase activity of the virion host shutoff protein UL41 probably to ensure necessary levels of key cellular mRNAs and proteins. Plays a role in microtubule reorganization that occurs after viral infection by stabilizing microtubule network. Plays a role in the inhibition of host innate immune system by targeting the CGAS enzymatic activity which is the principal cytosolic DNA sensor that detects invading viral DNA. Acts by mediating disruption of liquid-like droplets in which CGAS is activated, thereby preventing CGAS activity. This is Tegument protein VP22 from Equine herpesvirus 1 (strain Ab4p) (EHV-1).